The sequence spans 747 residues: Catalase-peroxidase (747 aa).

A signal peptide spans 1–27; that stretch reads MRKFSVSKVALLAATMAPALLPAAARA. The segment at residues 116 to 238 is a cross-link (tryptophyl-tyrosyl-methioninium (Trp-Tyr) (with M-264)); that stretch reads WHSAGTYRTA…LAAVQMGLIY (123 aa). The active-site Proton acceptor is His-117. The tryptophyl-tyrosyl-methioninium (Tyr-Met) (with W-116) cross-link spans 238–264; the sequence is YVNPEGPNGNPDPLLAAKDIRETFGRM. His-279 provides a ligand contact to heme b.

It belongs to the peroxidase family. Peroxidase/catalase subfamily. As to quaternary structure, homodimer or homotetramer. It depends on heme b as a cofactor. Post-translationally, formation of the three residue Trp-Tyr-Met cross-link is important for the catalase, but not the peroxidase activity of the enzyme.

The catalysed reaction is H2O2 + AH2 = A + 2 H2O. The enzyme catalyses 2 H2O2 = O2 + 2 H2O. Functionally, bifunctional enzyme with both catalase and broad-spectrum peroxidase activity. This chain is Catalase-peroxidase, found in Novosphingobium aromaticivorans (strain ATCC 700278 / DSM 12444 / CCUG 56034 / CIP 105152 / NBRC 16084 / F199).